Reading from the N-terminus, the 369-residue chain is Glycolate oxidase 1 (369 aa).

Positions 1 to 360 constitute an FMN hydroxy acid dehydrogenase domain; it reads MGEITNVMEY…TRAHIYTDAD (360 aa). Tyrosine 25 provides a ligand contact to glyoxylate. FMN is bound by residues 78–80, serine 107, 128–130, and threonine 156; these read PSA and QLY. Tyrosine 130 contributes to the glyoxylate binding site. Arginine 165 contributes to the glyoxylate binding site. The FMN site is built by lysine 231 and serine 253. Glyoxylate is bound by residues histidine 255 and arginine 258. Residue histidine 255 is the Proton acceptor of the active site. Residues 286–290 and 309–310 each bind FMN; these read DGGVR and GR. Residues 367–369 carry the Microbody targeting signal motif; it reads PRL.

It belongs to the FMN-dependent alpha-hydroxy acid dehydrogenase family. In terms of assembly, homotetramer. Interacts with rice dwarf virus (RDV) P8. This interaction promotes viral P8 relocation to virus factories peripheral to peroxisomes. The cofactor is FMN.

The protein resides in the peroxisome. It catalyses the reaction glycolate + O2 = glyoxylate + H2O2. The protein operates within photosynthesis; photorespiration; glycine from 2-phosphoglycolate: step 2/3. Catalyzes the oxidation of glycolate to glyoxylate, with a reduction of O2 to H2O2. Is a key enzyme in photorespiration in plants. Can exert a strong regulation over photosynthesis, possibly through a feed-back inhibition on Rubisco activase. Does not seem to play a role in oxalate accumulation. This is Glycolate oxidase 1 (GLO1) from Oryza sativa subsp. indica (Rice).